Consider the following 122-residue polypeptide: Basic phospholipase A2 vipoxin B chain (122 aa).

Disulfide bonds link C26–C115, C28–C44, C43–C95, C49–C122, C50–C88, C57–C81, and C75–C86. Positions 27, 29, and 31 each coordinate Ca(2+). Residue H47 is part of the active site. A Ca(2+)-binding site is contributed by D48. D89 is a catalytic residue.

This sequence belongs to the phospholipase A2 family. Group II subfamily. D49 sub-subfamily. In terms of assembly, heterodimer of A (AC P04084) and B chains; non-covalently linked. The A chain (acidic) is non-toxic, and increases the toxicity of the B chain (basic). The A chain may act as factor stabilizing the complex structure and hence retaining its toxicity by preventing non-specific binding. Upon binding to the target membranes the A chain is postulated to dissociate. It depends on Ca(2+) as a cofactor. Expressed by the venom gland.

It is found in the secreted. It catalyses the reaction a 1,2-diacyl-sn-glycero-3-phosphocholine + H2O = a 1-acyl-sn-glycero-3-phosphocholine + a fatty acid + H(+). Its function is as follows. Heterodimer: postsynaptic neurotoxin. In terms of biological role, monomer: snake venom phospholipase A2 (PLA2) that shows hemolytic activity and inhibition of platelet aggregation. The hemolytic activity occurs only in presence of fatty acids (unsaturated fatty acids facilitate induce a strong hemolytic activity, whereas saturated fatty acids induce a slight activity). The inhibition of platelet aggregation is almost maximal when aggregation is induced by collagen, and arachidonic acid, whereas it is only of 30% when the aggregation is induced by ADP. PLA2 catalyzes the calcium-dependent hydrolysis of the 2-acyl groups in 3-sn-phosphoglycerides. This Vipera ammodytes meridionalis (Eastern sand viper) protein is Basic phospholipase A2 vipoxin B chain.